A 188-amino-acid chain; its full sequence is Urease accessory protein UreE (188 aa).

The tract at residues 142–174 (AYQSQAGAGHHHHHDHDHGHSHDHSHTHSHADS) is disordered. Residues 157–172 (HDHGHSHDHSHTHSHA) are compositionally biased toward basic and acidic residues.

It belongs to the UreE family.

It localises to the cytoplasm. Its function is as follows. Involved in urease metallocenter assembly. Binds nickel. Probably functions as a nickel donor during metallocenter assembly. The sequence is that of Urease accessory protein UreE from Tolumonas auensis (strain DSM 9187 / NBRC 110442 / TA 4).